Consider the following 490-residue polypeptide: Allantoin permease (490 aa).

12 helical membrane-spanning segments follow: residues Ile-36 to Ile-56, Pro-60 to Leu-80, Ala-116 to Leu-136, Ile-151 to Leu-171, Leu-190 to Gly-210, Thr-225 to Leu-245, Phe-265 to Gly-285, Tyr-308 to Ala-328, Gly-350 to Ala-370, Val-373 to Ala-393, Ala-425 to Leu-445, and Leu-448 to Met-468.

The protein belongs to the purine-cytosine permease (2.A.39) family.

It is found in the cell membrane. The catalysed reaction is (S)-allantoin(in) + H(+)(in) = (S)-allantoin(out) + H(+)(out). Its function is as follows. Uptake of allantoin into the cell. Allantoin uptake is not dependent on sodium, and PucI is likely to be a proton-coupled symporter. Shows highest recognition for binding of allantoin, good recognition for binding of hydantoin, L-5-benzylhydantoin and 5-hydroxyhydantoin, and to a lesser extent for a range of nucleobases and nucleosides. In Bacillus subtilis (strain 168), this protein is Allantoin permease.